The chain runs to 294 residues: Glyceraldehyde-3-phosphate dehydrogenase (294 aa).

Residues Asp-19, Lys-63, and Thr-105 each contribute to the NAD(+) site. Residues Ser-134–Thr-136 and Thr-165 each bind D-glyceraldehyde 3-phosphate. Cys-135 serves as the catalytic Nucleophile. A disordered region spans residues Lys-169 to Asn-188. Residues Thr-194–Gly-195 and Arg-217 contribute to the D-glyceraldehyde 3-phosphate site.

Belongs to the glyceraldehyde-3-phosphate dehydrogenase family. Homotetramer.

Its subcellular location is the cytoplasm. The catalysed reaction is D-glyceraldehyde 3-phosphate + phosphate + NAD(+) = (2R)-3-phospho-glyceroyl phosphate + NADH + H(+). It participates in carbohydrate degradation; glycolysis; pyruvate from D-glyceraldehyde 3-phosphate: step 1/5. In terms of biological role, catalyzes the oxidative phosphorylation of glyceraldehyde 3-phosphate (G3P) to 1,3-bisphosphoglycerate (BPG) using the cofactor NAD. The first reaction step involves the formation of a hemiacetal intermediate between G3P and a cysteine residue, and this hemiacetal intermediate is then oxidized to a thioester, with concomitant reduction of NAD to NADH. The reduced NADH is then exchanged with the second NAD, and the thioester is attacked by a nucleophilic inorganic phosphate to produce BPG. This Serratia marcescens protein is Glyceraldehyde-3-phosphate dehydrogenase (gap).